Reading from the N-terminus, the 215-residue chain is Thiamine-phosphate synthase (215 aa).

Residues 37 to 41 (QLRIK) and Asn-69 each bind 4-amino-2-methyl-5-(diphosphooxymethyl)pyrimidine. Residues Asp-70 and Asp-89 each contribute to the Mg(2+) site. Residue Ser-108 participates in 4-amino-2-methyl-5-(diphosphooxymethyl)pyrimidine binding. 134–136 (TQT) is a 2-[(2R,5Z)-2-carboxy-4-methylthiazol-5(2H)-ylidene]ethyl phosphate binding site. Position 137 (Lys-137) interacts with 4-amino-2-methyl-5-(diphosphooxymethyl)pyrimidine. 2-[(2R,5Z)-2-carboxy-4-methylthiazol-5(2H)-ylidene]ethyl phosphate contacts are provided by residues Gly-166 and 186 to 187 (VS).

The protein belongs to the thiamine-phosphate synthase family. Requires Mg(2+) as cofactor.

The enzyme catalyses 2-[(2R,5Z)-2-carboxy-4-methylthiazol-5(2H)-ylidene]ethyl phosphate + 4-amino-2-methyl-5-(diphosphooxymethyl)pyrimidine + 2 H(+) = thiamine phosphate + CO2 + diphosphate. It catalyses the reaction 2-(2-carboxy-4-methylthiazol-5-yl)ethyl phosphate + 4-amino-2-methyl-5-(diphosphooxymethyl)pyrimidine + 2 H(+) = thiamine phosphate + CO2 + diphosphate. The catalysed reaction is 4-methyl-5-(2-phosphooxyethyl)-thiazole + 4-amino-2-methyl-5-(diphosphooxymethyl)pyrimidine + H(+) = thiamine phosphate + diphosphate. It functions in the pathway cofactor biosynthesis; thiamine diphosphate biosynthesis; thiamine phosphate from 4-amino-2-methyl-5-diphosphomethylpyrimidine and 4-methyl-5-(2-phosphoethyl)-thiazole: step 1/1. Functionally, condenses 4-methyl-5-(beta-hydroxyethyl)thiazole monophosphate (THZ-P) and 2-methyl-4-amino-5-hydroxymethyl pyrimidine pyrophosphate (HMP-PP) to form thiamine monophosphate (TMP). In Yersinia pseudotuberculosis serotype I (strain IP32953), this protein is Thiamine-phosphate synthase.